The chain runs to 285 residues: Nucleotide-binding protein Gmet_1286 (285 aa).

G8–S15 is a binding site for ATP. D59–G62 lines the GTP pocket.

Belongs to the RapZ-like family.

Its function is as follows. Displays ATPase and GTPase activities. The protein is Nucleotide-binding protein Gmet_1286 of Geobacter metallireducens (strain ATCC 53774 / DSM 7210 / GS-15).